The following is an 890-amino-acid chain: Chloroquine resistance transporter (890 aa).

Disordered regions lie at residues 1–163 and 280–300; these read MPPA…EAPL and GMQR…AAEG. Over 1–349 the chain is Cytoplasmic; it reads MPPAHHGSGG…RATRWIDRNA (349 aa). The span at 8-19 shows a compositional bias: basic residues; that stretch reads SGGRRRPGRGNK. 2 stretches are compositionally biased toward low complexity: residues 102 to 126 and 134 to 156; these read APSQ…SSRS and SPVA…TSAS. A helical transmembrane segment spans residues 350–372; the sequence is ATVRVACYTFLLLVTSTGNTICF. The Vacuolar segment spans residues 373-391; it reads KKMIDKMPNYSPCLTQVTT. Residues 392–412 traverse the membrane as a helical segment; that stretch reads VVFVPVFFALSLYTDYAGGLP. Over 413-422 the chain is Cytoplasmic; the sequence is QEMADFPKRN. A helical transmembrane segment spans residues 423-443; it reads FAVMGFLDSFSGVMAIIGAVH. The Vacuolar segment spans residues 444-447; that stretch reads TTGT. The helical transmembrane segment at 448–468 threads the bilayer; sequence TQVVLQQSCIVFSLLASIVML. The Cytoplasmic portion of the chain corresponds to 469–471; it reads RKR. The helical transmembrane segment at 472–492 threads the bilayer; it reads FHAAHYLGALVIILGVLVVKL. The Vacuolar segment spans residues 493 to 505; the sequence is PDLLHPSSDGGGD. Residues 506 to 526 traverse the membrane as a helical segment; sequence VFVFNLLYLLSNLPTAVSCVY. Topologically, residues 527–544 are cytoplasmic; that stretch reads KEVAFRGVEMGTNYLQAW. The chain crosses the membrane as a helical span at residues 545 to 565; it reads VALFQFLIGFLVLPLNALPVL. At 566–614 the chain is on the vacuolar side; that stretch reads GPQRVPLAELPASLWNGTRCLFGFNTIVTNCGGAGNMESPCDNCEGAWK. Residue Asn581 is glycosylated (N-linked (GlcNAc...) asparagine). 2 disulfide bridges follow: Cys585-Cys609 and Cys596-Cys606. The helical transmembrane segment at 615–634 threads the bilayer; sequence YVGMYLSFNLLYNMFIIFVV. Residues 635-640 are Cytoplasmic-facing; that stretch reads KSGGAA. Residues 641-663 traverse the membrane as a helical segment; the sequence is LTFLVSTLRLPVTALAFCSRAIM. Over 664–673 the chain is Vacuolar; that stretch reads GDRAVPPKAT. A helical transmembrane segment spans residues 674-694; the sequence is DFYGLLVLILGLVIYRAGGIM. Topologically, residues 695-890 are cytoplasmic; it reads KRRAQRRAVA…GKSRANNGCI (196 aa). Positions 798 to 871 are disordered; the sequence is AAFTPFTQRM…NRVGGYEPPS (74 aa).

It belongs to the CRT-like transporter family.

The protein resides in the vacuole membrane. Nutrient transporter. Involved in maintaining the osmotic homeostasis of the digestive vacuole. Required for the proper organization of the endolysosomal system and, in turn, indirectly for microneme secretion and parasite invasion. Required for bradyzoite viability and cyst development. This chain is Chloroquine resistance transporter, found in Toxoplasma gondii.